We begin with the raw amino-acid sequence, 307 residues long: MDHMLPSPYNIPGIGTPLHQPEEDQQILPNAMQQQQLQQQQSQAQPSLAALGSSPIVGFGAIMGTPQRSMHTYAPTASYATPQQMMQPQTPQNMMSPMIAAGNLSSQQMLSQASPAPMTPLTPLSADPGILPQLQNIVSTVNLDCKLDLKKIALHARNAEYNPKRFAAVIMRIREPRTTALIFSSGKMVCTGAKSEEDSRLAARKYARIIQKLGFTAKFLDFKIQNMVGSCDVKFPIRLEGLVLTHGQFSSYEPELFPGLIYRMVKPRIVLLIFVSGKVVLTGAKVREEIYEAFDNIYPILKSFKKQ.

Positions 1–21 (MDHMLPSPYNIPGIGTPLHQP) are disordered. Repeat copies occupy residues 134-210 (LQNI…ARII) and 224-301 (IQNM…YPIL).

It belongs to the TBP family. As to quaternary structure, belongs to the TFIID complex together with the TBP-associated factors (TAFs). Binds DNA as monomer.

The protein localises to the nucleus. General transcription factor that functions at the core of the DNA-binding multiprotein factor TFIID. Binding of TFIID to the TATA box is the initial transcriptional step of the pre-initiation complex (PIC), playing a role in the activation of eukaryotic genes transcribed by RNA polymerase II. This is TATA-box-binding protein (Tbp) from Bombyx mori (Silk moth).